The sequence spans 475 residues: Aspartyl/glutamyl-tRNA(Asn/Gln) amidotransferase subunit B (475 aa).

Belongs to the GatB/GatE family. GatB subfamily. Heterotrimer of A, B and C subunits.

The catalysed reaction is L-glutamyl-tRNA(Gln) + L-glutamine + ATP + H2O = L-glutaminyl-tRNA(Gln) + L-glutamate + ADP + phosphate + H(+). The enzyme catalyses L-aspartyl-tRNA(Asn) + L-glutamine + ATP + H2O = L-asparaginyl-tRNA(Asn) + L-glutamate + ADP + phosphate + 2 H(+). Its function is as follows. Allows the formation of correctly charged Asn-tRNA(Asn) or Gln-tRNA(Gln) through the transamidation of misacylated Asp-tRNA(Asn) or Glu-tRNA(Gln) in organisms which lack either or both of asparaginyl-tRNA or glutaminyl-tRNA synthetases. The reaction takes place in the presence of glutamine and ATP through an activated phospho-Asp-tRNA(Asn) or phospho-Glu-tRNA(Gln). This chain is Aspartyl/glutamyl-tRNA(Asn/Gln) amidotransferase subunit B, found in Bacillus cereus (strain B4264).